A 439-amino-acid chain; its full sequence is Elongation factor 1-alpha 2 (439 aa).

The tr-type G domain occupies 6–229; that stretch reads KDHLNLVVIG…DEFKVPKRPI (224 aa). Residues 15-22 are G1; the sequence is GHVDSGKS. GTP is bound at residue 15–22; the sequence is GHVDSGKS. Residues 71-75 are G2; that stretch reads GITIN. The segment at 92–95 is G3; sequence DAPG. Residues 92–96 and 154–157 each bind GTP; these read DAPGH and NKMD. Positions 154–157 are G4; the sequence is NKMD. The tract at residues 193-195 is G5; it reads SGF.

The protein belongs to the TRAFAC class translation factor GTPase superfamily. Classic translation factor GTPase family. EF-Tu/EF-1A subfamily.

The protein localises to the cytoplasm. This protein promotes the GTP-dependent binding of aminoacyl-tRNA to the A-site of ribosomes during protein biosynthesis. The chain is Elongation factor 1-alpha 2 (EFA2) from Euplotes crassus.